We begin with the raw amino-acid sequence, 379 residues long: Cathepsin B-like cysteine proteinase 6 (379 aa).

Residues 1 to 16 (MKTLLFLSCIVVAAYC) form the signal peptide. The propeptide occupies 17 to 104 (ACNDNLESVL…LSKTKDLDLD (88 aa)). Disulfide bonds link cysteine 118/cysteine 147, cysteine 130/cysteine 174, cysteine 166/cysteine 233, cysteine 167/cysteine 170, cysteine 203/cysteine 237, and cysteine 211/cysteine 223. Residue cysteine 133 is part of the active site. Asparagine 196 carries an N-linked (GlcNAc...) asparagine glycan. An N-linked (GlcNAc...) asparagine; atypical glycan is attached at asparagine 201. Active-site residues include histidine 305 and asparagine 325.

This sequence belongs to the peptidase C1 family.

This chain is Cathepsin B-like cysteine proteinase 6 (cpr-6), found in Caenorhabditis elegans.